A 233-amino-acid polypeptide reads, in one-letter code: Proteasome subunit alpha (233 aa).

This sequence belongs to the peptidase T1A family. The 20S proteasome core is composed of 14 alpha and 14 beta subunits that assemble into four stacked heptameric rings, resulting in a barrel-shaped structure. The two inner rings, each composed of seven catalytic beta subunits, are sandwiched by two outer rings, each composed of seven alpha subunits. The catalytic chamber with the active sites is on the inside of the barrel. Has a gated structure, the ends of the cylinder being occluded by the N-termini of the alpha-subunits. Is capped at one or both ends by the proteasome regulatory ATPase, PAN. Post-translationally, the N-terminus is blocked.

The protein localises to the cytoplasm. With respect to regulation, the formation of the proteasomal ATPase PAN-20S proteasome complex, via the docking of the C-termini of PAN into the intersubunit pockets in the alpha-rings, triggers opening of the gate for substrate entry. Interconversion between the open-gate and close-gate conformations leads to a dynamic regulation of the 20S proteasome proteolysis activity. Component of the proteasome core, a large protease complex with broad specificity involved in protein degradation. The T.acidophilum proteasome is able to cleave oligopeptides after Tyr, Leu, Phe, and to a lesser extent after Glu and Arg. Thus, displays chymotrypsin-like activity and low level of caspase-like and trypsin-like activities. The sequence is that of Proteasome subunit alpha from Thermoplasma acidophilum (strain ATCC 25905 / DSM 1728 / JCM 9062 / NBRC 15155 / AMRC-C165).